A 101-amino-acid polypeptide reads, in one-letter code: uncharacterized protein (101 aa).

Its function is as follows. May regulate the expression of phage structural components with protein P13. This is an uncharacterized protein from Pseudoalteromonas phage PM2 (Bacteriophage PM2).